The sequence spans 932 residues: DNA mismatch repair protein MutS (932 aa).

615-622 (GPNMAGKS) is a binding site for ATP.

This sequence belongs to the DNA mismatch repair MutS family.

This protein is involved in the repair of mismatches in DNA. It is possible that it carries out the mismatch recognition step. This protein has a weak ATPase activity. The sequence is that of DNA mismatch repair protein MutS from Clostridium botulinum (strain Loch Maree / Type A3).